The sequence spans 517 residues: Maturase K (517 aa).

The protein belongs to the intron maturase 2 family. MatK subfamily.

Its subcellular location is the plastid. It localises to the chloroplast. Functionally, usually encoded in the trnK tRNA gene intron. Probably assists in splicing its own and other chloroplast group II introns. This chain is Maturase K, found in Trillium maculatum (Spotted wakerobin).